A 1218-amino-acid chain; its full sequence is NACHT, LRR and PYD domains-containing protein 1 allele 2 (1218 aa).

Residues 1-61 are disordered; it reads MEESQSKQES…SLPGWSSTSK (61 aa). Positions 7–29 are enriched in polar residues; the sequence is KQESNTRVAQHGSQQDVDPTFQT. In terms of domain architecture, NACHT spans 175–484; the sequence is QLVIIEGAAG…EFFAAMSYIL (310 aa). 181-188 contacts ATP; sequence GAAGIGKS. 3 LRR repeats span residues 343–364, 673–693, and 730–750; these read KERN…LTLC, NLEE…RSLC, and RLAE…RQLC. Residues 799-815 show a composition bias toward polar residues; it reads TMPTENTDGEESLTSSK. The tract at residues 799–842 is disordered; sequence TMPTENTDGEESLTSSKQQQQQSGDKHMEPLGTDDDFWGPSGPV. Residues 835-968 form a ZU5 region; that stretch reads FWGPSGPVST…HFAVLENPSF (134 aa). Residues 835-1118 enclose the FIIND domain; it reads FWGPSGPVST…LRPALPRMAS (284 aa). The UPA stretch occupies residues 969–1118; it reads SPMGVLLRMI…LRPALPRMAS (150 aa). One can recognise a CARD domain in the interval 1122 to 1211; it reads DAPALLHFVD…HLIMDLLEKS (90 aa).

It belongs to the NLRP family. As to quaternary structure, interacts (via LRR repeats) with BCL2 and BCL2L1 (via the loop between motifs BH4 and BH3). Interacts with NOD2; this interaction is enhanced in the presence of muramyl dipeptide (MDP) and increases IL1B release. Interacts with EIF2AK2/PKR; this interaction requires EIF2AK2 activity, is accompanied by EIF2AK2 autophosphorylation and promotes inflammasome assembly in response to danger-associated signals. Interacts with MEFV; this interaction targets Nlrp1a to degradation by autophagy, hence preventing excessive IL1B- and IL18-mediated inflammation. Interacts with DPP9; leading to inhibit activation of the inflammasome. DPP9 acts via formation of a ternary complex, composed of a DPP9 homodimer, one full-length NLRP1 protein, and one cleaved C-terminus of Nlrp1a (NACHT, LRR and PYD domains-containing protein 1a, C-terminus). Interacts with DPP8; leading to inhibit activation of the inflammasome, probably via formation of a ternary complex with DPP8. In terms of assembly, interacts with the C-terminal part of Nlrp1a (NACHT, LRR and PYD domains-containing protein 1a, C-terminus) in absence of pathogens and other damage-associated signals. Interacts with the N-terminal part of Nlrp1a (NACHT, LRR and PYD domains-containing protein 1a, N-terminus) in absence of pathogens and other damage-associated signals. Homomultimer; forms the Nlrp1a inflammasome polymeric complex, a filament composed of homopolymers of this form in response to pathogens and other damage-associated signals. The Nlrp1a inflammasome polymeric complex directly recruits pro-caspase-1 (proCASP1) independently of PYCARD/ASC. Interacts (via CARD domain) with CASP1 (via CARD domain); leading to CASP1 activation. In terms of processing, autocatalytically cleaved. Autocatalytic cleavage in FIIND region occurs constitutively, prior to activation signals, and is required for inflammasome activity (IL1B release), possibly by facilitating CASP1 binding. Both N- and C-terminal parts remain associated non-covalently. Post-translationally, (Microbial infection) Cleavage by B.anthracis lethal toxin (LT) endopeptidase promotes ubiquitination and degradation of the N-terminal part, releasing the cleaved C-terminal part of the protein (NACHT, LRR and PYD domains-containing protein 1a, C-terminus), which polymerizes and forms the Nlrp1a inflammasome. Ubiquitinated in response to pathogen-associated signals, leading to its degradation by the proteasome and subsequent release of the cleaved C-terminal part of the protein (NACHT, LRR and PYD domains-containing protein 1a, C-terminus), which polymerizes and forms the Nlrp1a inflammasome.

Its subcellular location is the cytoplasm. It is found in the cytosol. It localises to the nucleus. The protein resides in the inflammasome. Activated by cleavage by B.anthracis lethal toxin (LT) endopeptidase. Cleavage by LT promotes ubiquitination and degradation of the N-terminal part, releasing the cleaved C-terminal part of the protein (NACHT, LRR and PYD domains-containing protein 1a, C-terminus), which polymerizes and forms the Nlrp1a inflammasome. Nlrp1a inflammasome is inhibited by DPP8 and DPP9, which sequester the C-terminal fragment of Nlrp1a (NACHT, LRR and PYD domains-containing protein 1a, C-terminus) in a ternary complex, thereby preventing Nlrp1a oligomerization and activation. Nlrp1a inflammasome is weakly activated by Val-boroPro (Talabostat, PT-100), an inhibitor of dipeptidyl peptidases DPP8 and DPP9. Val-boroPro relieves inhibition of DPP8 and/or DPP9 by promoting disruption of the ternary complex, releasing its C-terminal part from autoinhibition. Weakly activated by Toxoplasma gondii. Functionally, acts as the sensor component of the Nlrp1a inflammasome, which mediates inflammasome activation in response to various pathogen-associated signals, leading to subsequent pyroptosis. Inflammasomes are supramolecular complexes that assemble in the cytosol in response to pathogens and other damage-associated signals and play critical roles in innate immunity and inflammation. Acts as a recognition receptor (PRR): recognizes specific pathogens and other damage-associated signals, such as B.anthracis lethal toxin (LT) or Val-boroPro inhibitor, and mediates the formation of the inflammasome polymeric complex. In response to pathogen-associated signals, the N-terminal part of Nlrp1a is degraded by the proteasome, releasing the cleaved C-terminal part of the protein (NACHT, LRR and PYD domains-containing protein 1a, C-terminus), which polymerizes to initiate the formation of the inflammasome complex: the inflammasome directly recruits pro-caspase-1 (proCASP1) independently of PYCARD/ASC and promotes caspase-1 (CASP1) activation, which subsequently cleaves and activates inflammatory cytokines IL1B and IL18 and gasdermin-D (GSDMD), leading to pyroptosis. In the absence of GSDMD expression, the Nlrp1a inflammasome is able to recruit and activate CASP8, leading to activation of gasdermin-E (GSDME). Its function is as follows. Constitutes the precursor of the Nlrp1a inflammasome, which mediates autoproteolytic processing within the FIIND domain to generate the N-terminal and C-terminal parts, which are associated non-covalently in absence of pathogens and other damage-associated signals. Regulatory part that prevents formation of the Nlrp1a inflammasome: in absence of pathogens and other damage-associated signals, interacts with the C-terminal part of Nlrp1a (NACHT, LRR and PYD domains-containing protein 1a, C-terminus), preventing activation of the Nlrp1a inflammasome. In response to pathogen-associated signals, this part is ubiquitinated by the N-end rule pathway and degraded by the proteasome, releasing the cleaved C-terminal part of the protein, which polymerizes and forms the Nlrp1a inflammasome. In terms of biological role, constitutes the active part of the Nlrp1a inflammasome. In absence of pathogens and other damage-associated signals, interacts with the N-terminal part of Nlrp1a (NACHT, LRR and PYD domains-containing protein 1a, N-terminus), preventing activation of the Nlrp1a inflammasome. In response to pathogen-associated signals, the N-terminal part of Nlrp1a is degraded by the proteasome, releasing this form, which polymerizes to form the Nlrp1a inflammasome complex: the Nlrp1a inflammasome complex then directly recruits pro-caspase-1 (proCASP1) and promotes caspase-1 (CASP1) activation, leading to gasdermin-D (GSDMD) cleavage and subsequent pyroptosis. In Rattus norvegicus (Rat), this protein is NACHT, LRR and PYD domains-containing protein 1 allele 2.